The following is a 700-amino-acid chain: pH-response regulator protein palI/prr-5 (700 aa).

Residues 1–8 (MLRPATPL) lie on the Cytoplasmic side of the membrane. The helical transmembrane segment at 9–29 (AVLLFAAFGLLTLATISTPII) threads the bilayer. Residues 30-90 (KQIPLSSFEI…PRATRSTLSS (61 aa)) lie on the Extracellular side of the membrane. The chain crosses the membrane as a helical span at residues 91 to 111 (ILIVHPVAALITLINFVLAIV). Over 112–123 (AHFHSPSHSARY) the chain is Cytoplasmic. Residues 124–144 (LLILFIVSFVDFIVCLLCFLV) traverse the membrane as a helical segment. The Extracellular portion of the chain corresponds to 145–152 (DVLLFIPH). Residues 153–173 (LSWGSYIVVAATILVAFCGLV) traverse the membrane as a helical segment. Residues 174-700 (TCAMRRTLVN…GNMPRAAGPR (527 aa)) are Cytoplasmic-facing. Disordered regions lie at residues 226–491 (SGAN…GIRD), 507–560 (VPDP…PISE), and 573–700 (DVDP…AGPR). Basic and acidic residues predominate over residues 234–252 (KLPEFTTFEKKDDRSEERI). Residues 320-378 (GRGGMPPGGYRGRGGFPGPGRGGGPPQNGRGGYGPPGRGRGGYGPPPRGYGGPGPRGGR) are compositionally biased toward gly residues. Over residues 414–424 (SPYANRQQSPG) the composition is skewed to polar residues. Polar residues-rich tracts occupy residues 593–603 (SMQSPPASNSY) and 615–637 (ESENSNFTSISQRGINPRWNSAN). Positions 657 to 671 (VVPRRPVNRPGAGPA) are enriched in low complexity.

It belongs to the palI/RIM9 family.

The protein resides in the cell membrane. Required for the proteolytic cleavage of the transcription factor pacc-1 in response to alkaline ambient pH. The protein is pH-response regulator protein palI/prr-5 (prr-5) of Neurospora crassa (strain ATCC 24698 / 74-OR23-1A / CBS 708.71 / DSM 1257 / FGSC 987).